A 99-amino-acid chain; its full sequence is RNA-binding protein Hfq (99 aa).

A Sm domain is found at 10-71 (DLFLNQLRKE…ISSILPSKPI (62 aa)). The interval 77-99 (VQNSQVQNTASQQSNNNQNQESK) is disordered.

It belongs to the Hfq family. In terms of assembly, homohexamer.

Functionally, RNA chaperone that binds small regulatory RNA (sRNAs) and mRNAs to facilitate mRNA translational regulation in response to envelope stress, environmental stress and changes in metabolite concentrations. Also binds with high specificity to tRNAs. The protein is RNA-binding protein Hfq of Caldicellulosiruptor saccharolyticus (strain ATCC 43494 / DSM 8903 / Tp8T 6331).